The sequence spans 426 residues: Enolase (426 aa).

Q162 lines the (2R)-2-phosphoglycerate pocket. Catalysis depends on E204, which acts as the Proton donor. The Mg(2+) site is built by D241, E284, and D311. Residues K336, R365, S366, and K387 each contribute to the (2R)-2-phosphoglycerate site. The active-site Proton acceptor is the K336.

The protein belongs to the enolase family. Mg(2+) is required as a cofactor.

The protein localises to the cytoplasm. The protein resides in the secreted. It is found in the cell surface. It carries out the reaction (2R)-2-phosphoglycerate = phosphoenolpyruvate + H2O. The protein operates within carbohydrate degradation; glycolysis; pyruvate from D-glyceraldehyde 3-phosphate: step 4/5. In terms of biological role, catalyzes the reversible conversion of 2-phosphoglycerate (2-PG) into phosphoenolpyruvate (PEP). It is essential for the degradation of carbohydrates via glycolysis. The chain is Enolase from Acidithiobacillus ferrooxidans (strain ATCC 23270 / DSM 14882 / CIP 104768 / NCIMB 8455) (Ferrobacillus ferrooxidans (strain ATCC 23270)).